The chain runs to 141 residues: Ribonuclease VapC2 (141 aa).

Positions 7–129 (LIDKSALVRL…FDAIAALTGQ (123 aa)) constitute a PINc domain. Residues aspartate 99, aspartate 117, and aspartate 119 each coordinate Mg(2+).

It belongs to the PINc/VapC protein family. As to quaternary structure, probably active as a homodimer. Mg(2+) serves as cofactor.

Its function is as follows. Toxic component of a type II toxin-antitoxin (TA) system. Acts as an RNase. All its toxic effects are neutralized by coexpression with cognate antitoxin VapB2. In Mycobacterium tuberculosis (strain CDC 1551 / Oshkosh), this protein is Ribonuclease VapC2.